A 234-amino-acid chain; its full sequence is Small ribosomal subunit protein uS2 (234 aa).

The protein belongs to the universal ribosomal protein uS2 family.

The polypeptide is Small ribosomal subunit protein uS2 (Prochlorococcus marinus (strain MIT 9515)).